Consider the following 366-residue polypeptide: Chalcone synthase B (366 aa).

Cysteine 172 is an active-site residue.

This sequence belongs to the thiolase-like superfamily. Chalcone/stilbene synthases family.

It carries out the reaction (E)-4-coumaroyl-CoA + 3 malonyl-CoA + 3 H(+) = 2',4,4',6'-tetrahydroxychalcone + 3 CO2 + 4 CoA. It participates in secondary metabolite biosynthesis; flavonoid biosynthesis. Its function is as follows. The primary product of this enzyme is 4,2',4',6'-tetrahydroxychalcone (also termed naringenin-chalcone or chalcone) which can under specific conditions spontaneously isomerize into naringenin. This is Chalcone synthase B (CHSB) from Ipomoea triloba (Trilobed morning glory).